The primary structure comprises 335 residues: MDLWNWDEASLQEVPPGDKLTGLGAEFGFYFPEVALQEDTPITPMNVEGCWKGFPELDWNPALPHEDVPFQAEPVAHPLPWSRDWTDLGCNTSDPWSCASQTPGPAPPGTSPSPFVGFEGATGQNPATSAGGVPSWSHPPAAWSTTSWDCSVGPSGATYWDNGLGGEAHEDYKMSWGGSAGSDYTTTWNTGLQDCSIPFEGHQSPAFTTPSKSNKQSDRATLTRYSKTNHRGPIQLWQFLLELLHDGARSSCIRWTGNSREFQLCDPKEVARLWGERKRKPGMNYEKLSRGLRYYYRRDIVLKSGGRKYTYRFGGRVPVLAYQDDMGHLPGAEGQ.

Disordered regions lie at residues 94 to 138 (DPWS…SWSH) and 201 to 220 (GHQS…SDRA). Over residues 205 to 220 (PAFTTPSKSNKQSDRA) the composition is skewed to polar residues. Positions 234-314 (IQLWQFLLEL…GGRKYTYRFG (81 aa)) form a DNA-binding region, ETS.

Belongs to the ETS family. As to expression, testis.

It localises to the nucleus. Its function is as follows. Binds to DNA sequences containing the consensus pentanucleotide 5'-CGGA[AT]-3'. This chain is ETS translocation variant 2 (Etv2), found in Mus musculus (Mouse).